The following is a 437-amino-acid chain: Phosphoglucosamine mutase (437 aa).

S93 acts as the Phosphoserine intermediate in catalysis. Residues S93, D230, D232, and D234 each coordinate Mg(2+). At S93 the chain carries Phosphoserine.

It belongs to the phosphohexose mutase family. Requires Mg(2+) as cofactor. Activated by phosphorylation.

It carries out the reaction alpha-D-glucosamine 1-phosphate = D-glucosamine 6-phosphate. Its function is as follows. Catalyzes the conversion of glucosamine-6-phosphate to glucosamine-1-phosphate. The chain is Phosphoglucosamine mutase from Clavibacter michiganensis subsp. michiganensis (strain NCPPB 382).